The primary structure comprises 201 residues: Pectinesterase inhibitor 7 (201 aa).

Positions Met-1–Ala-24 are cleaved as a signal peptide. Cystine bridges form between Cys-42–Cys-51 and Cys-108–Cys-159.

It belongs to the PMEI family. As to quaternary structure, binds reversibly to PME3 to inhibit its activity; the stability of the PME3-PMEI7 complex and the inhibition of the pectin methylesterase (PME) activity is pH-dependent, based on protonation status of amino-acids at the complex interface. Accumulates in etiolated hypocotyls (at protein level).

It localises to the secreted. The protein resides in the extracellular space. The protein localises to the apoplast. Its subcellular location is the cell wall. Functionally, pectin methylesterase (PME) inhibitor that can target PME3 in a pH-dependent manner, mainly in slightly acidic conditions (pH 6.0 and 5.0) but not at pH 7.0; this processus relies on changes in the protonation of amino acids involved in intermolecular and intramolecular interactions. Regulates homogalacturonan methylesterification during plant development. The sequence is that of Pectinesterase inhibitor 7 from Arabidopsis thaliana (Mouse-ear cress).